A 96-amino-acid chain; its full sequence is Co-chaperonin GroES (96 aa).

This sequence belongs to the GroES chaperonin family. Heptamer of 7 subunits arranged in a ring. Interacts with the chaperonin GroEL.

Its subcellular location is the cytoplasm. Together with the chaperonin GroEL, plays an essential role in assisting protein folding. The GroEL-GroES system forms a nano-cage that allows encapsulation of the non-native substrate proteins and provides a physical environment optimized to promote and accelerate protein folding. GroES binds to the apical surface of the GroEL ring, thereby capping the opening of the GroEL channel. This Shewanella amazonensis (strain ATCC BAA-1098 / SB2B) protein is Co-chaperonin GroES.